The following is a 259-amino-acid chain: Deoxyribose-phosphate aldolase (259 aa).

Asp-102 (proton donor/acceptor) is an active-site residue. Lys-167 acts as the Schiff-base intermediate with acetaldehyde in catalysis. The Proton donor/acceptor role is filled by Lys-201.

This sequence belongs to the DeoC/FbaB aldolase family. DeoC type 2 subfamily.

The protein resides in the cytoplasm. It carries out the reaction 2-deoxy-D-ribose 5-phosphate = D-glyceraldehyde 3-phosphate + acetaldehyde. It participates in carbohydrate degradation; 2-deoxy-D-ribose 1-phosphate degradation; D-glyceraldehyde 3-phosphate and acetaldehyde from 2-deoxy-alpha-D-ribose 1-phosphate: step 2/2. Catalyzes a reversible aldol reaction between acetaldehyde and D-glyceraldehyde 3-phosphate to generate 2-deoxy-D-ribose 5-phosphate. The protein is Deoxyribose-phosphate aldolase of Enterobacter sp. (strain 638).